A 584-amino-acid chain; its full sequence is Extracellular serine/threonine protein kinase FAM20C (584 aa).

Residues 1-10 lie on the Cytoplasmic side of the membrane; that stretch reads MKMMLVRRFR. The propeptide occupies 1–92; it reads MKMMLVRRFR…PNKHTLRILQ (92 aa). Residues 11–31 traverse the membrane as a helical; Signal-anchor for type II membrane protein segment; that stretch reads VLILMVFLVACALHIALDLLP. Topologically, residues 32 to 584 are lumenal; it reads RLERRGARPS…DTEHRAASAR (553 aa). Disordered stretches follow at residues 62–81 and 94–159; these read QVRG…GDAG and FSSD…GDAS. Composition is skewed to low complexity over residues 71 to 81 and 95 to 112; these read PAASSAAGDAG and SSDP…KLPP. Asn-101 carries N-linked (GlcNAc...) asparagine glycosylation. Ser-106 is modified (phosphoserine). Basic and acidic residues predominate over residues 116–149; the sequence is PAERALRGRDPGALRPHDPAHRPLLRDPGPRRSE. Residues Gln-269, Lys-285, and Glu-306 each coordinate ATP. Glu-306 serves as a coordination point for Mn(2+). The N-linked (GlcNAc...) asparagine glycan is linked to Asn-335. The interval 354–565 is kinase domain; it reads FISPANNICF…AVRDCVERNG (212 aa). 2 disulfide bridges follow: Cys-362–Cys-378 and Cys-367–Cys-371. 389–392 contacts ATP; it reads AAFL. Cystine bridges form between Cys-426-Cys-500 and Cys-501-Cys-560. Asp-458 is an active-site residue. Residue Glu-463 coordinates ATP. N-linked (GlcNAc...) asparagine glycosylation is present at Asn-470. Asp-478 contributes to the ATP binding site. Mn(2+) is bound at residue Asp-478.

The protein belongs to the FAM20 family. As to quaternary structure, homodimer; disulfide-linked. Interacts with FAM20A; probably forming a heterotetramer of 2 subunits of FAM20A and 2 subunits of FAM20C. Interacts with protease MBTPS1/S1P; the interaction results in FAM20C cleavage and secretion. Interacts with COPII components SEC23A and SEC24A; transport of FAM20C from the endoplasmic reticulum to the Golgi is likely to be mediated by COPII vesicles. The cofactor is Mn(2+). N-glycosylation is required for folding. In terms of processing, autophosphorylated. Post-translationally, propeptide cleavage by MBTPS1/S1P promotes FAM20C secretion and maximal kinase activity which is essential for efficient osteoblast differentiation and biomineralization. As to expression, widely expressed.

It is found in the golgi apparatus membrane. The protein localises to the secreted. Its subcellular location is the endoplasmic reticulum. The catalysed reaction is L-seryl-[protein] + ATP = O-phospho-L-seryl-[protein] + ADP + H(+). The enzyme catalyses L-threonyl-[protein] + ATP = O-phospho-L-threonyl-[protein] + ADP + H(+). Serine/threonine protein kinase activity is increased upon interaction with FAM20A. Functionally, golgi serine/threonine protein kinase that phosphorylates secretory pathway proteins within Ser-x-Glu/pSer motifs and plays a key role in biomineralization of bones and teeth. Constitutes the main protein kinase for extracellular proteins, generating the majority of the extracellular phosphoproteome. Mainly phosphorylates proteins within the Ser-x-Glu/pSer motif, but also displays a broader substrate specificity. Phosphorylates ERO1A, enhancing its activity which is required to maintain endoplasmic reticulum redox homeostasis and for oxidative protein folding. During endoplasmic reticulum stress, phosphorylates P4HB/PDIA1 which induces a functional switch, causing P4HB to change from an oxidoreductase to a molecular chaperone. This is critical to maintain ER proteostasis and reduce cell death under ER stress. Phosphorylation of P4HB also promotes its interaction with ERN1, leading to reduced activity of ERN1, a key sensor for the endoplasmic reticulum unfolded protein response. Required for osteoblast differentiation and mineralization. Phosphorylates casein as well as a number of proteins involved in biomineralization such as AMELX, AMTN, ENAM and SPP1/OPN. In addition to its role in biomineralization, also plays a role in lipid homeostasis, wound healing and cell migration and adhesion. The chain is Extracellular serine/threonine protein kinase FAM20C from Homo sapiens (Human).